The sequence spans 405 residues: Replication factor C large subunit (405 aa).

Residue 47 to 54 (GPPGVGKT) coordinates ATP.

This sequence belongs to the activator 1 small subunits family. RfcL subfamily. In terms of assembly, heteromultimer composed of small subunits (RfcS) and large subunits (RfcL).

Functionally, part of the RFC clamp loader complex which loads the PCNA sliding clamp onto DNA. The protein is Replication factor C large subunit of Saccharolobus islandicus (strain M.16.4 / Kamchatka #3) (Sulfolobus islandicus).